The chain runs to 193 residues: dTTP/UTP pyrophosphatase (193 aa).

The Proton acceptor role is filled by D77.

Belongs to the Maf family. YhdE subfamily. The cofactor is a divalent metal cation.

It localises to the cytoplasm. The catalysed reaction is dTTP + H2O = dTMP + diphosphate + H(+). It carries out the reaction UTP + H2O = UMP + diphosphate + H(+). Functionally, nucleoside triphosphate pyrophosphatase that hydrolyzes dTTP and UTP. May have a dual role in cell division arrest and in preventing the incorporation of modified nucleotides into cellular nucleic acids. The chain is dTTP/UTP pyrophosphatase from Parabacteroides distasonis (strain ATCC 8503 / DSM 20701 / CIP 104284 / JCM 5825 / NCTC 11152).